The following is a 173-amino-acid chain: Myosin light chain 5 (173 aa).

The disordered stretch occupies residues 1 to 22 (MASRKTKKKEGGGLRAQRASSN). EF-hand domains lie at 30–65 (TQIQ…LGKT), 100–135 (DAEE…QADK), and 136–171 (MTAE…GEEK). Asp-43, Asn-45, Asp-47, and Asp-54 together coordinate Ca(2+).

Myosin is a hexamer of 2 heavy chains and 4 light chains. Jaw-closing muscles.

The polypeptide is Myosin light chain 5 (MYL5) (Felis catus (Cat)).